The sequence spans 46 residues: Phospholipase A2 superbin c (46 aa).

Positions 28, 30, and 32 each coordinate Ca(2+). Cys-29 and Cys-45 form a disulfide bridge.

Requires Ca(2+) as cofactor. Expressed by the venom gland.

It localises to the secreted. The catalysed reaction is a 1,2-diacyl-sn-glycero-3-phosphocholine + H2O = a 1-acyl-sn-glycero-3-phosphocholine + a fatty acid + H(+). Its function is as follows. Snake venom phospholipase A2 (PLA2) that inhibits collagen-induced platelet aggregation. In terms of inhibition of platelet aggregation, superbin c is more potent as superbin d. PLA2 catalyzes the calcium-dependent hydrolysis of the 2-acyl groups in 3-sn-phosphoglycerides. In Austrelaps superbus (Lowland copperhead snake), this protein is Phospholipase A2 superbin c.